A 163-amino-acid polypeptide reads, in one-letter code: Glutathione peroxidase 1 (163 aa).

Cys-36 is an active-site residue.

It belongs to the glutathione peroxidase family.

The protein resides in the cytoplasm. The catalysed reaction is 2 glutathione + H2O2 = glutathione disulfide + 2 H2O. May constitute a glutathione peroxidase-like protective system against oxidative stresses. This chain is Glutathione peroxidase 1 (gpx-1), found in Caenorhabditis elegans.